Here is a 347-residue protein sequence, read N- to C-terminus: tRNA pseudouridine synthase D (347 aa).

D78 functions as the Nucleophile in the catalytic mechanism. The region spanning 150 to 304 is the TRUD domain; sequence GLPNFFGPQR…AEGTRRAARL (155 aa).

It belongs to the pseudouridine synthase TruD family.

It carries out the reaction uridine(13) in tRNA = pseudouridine(13) in tRNA. Responsible for synthesis of pseudouridine from uracil-13 in transfer RNAs. The sequence is that of tRNA pseudouridine synthase D from Anaeromyxobacter dehalogenans (strain 2CP-C).